A 138-amino-acid polypeptide reads, in one-letter code: Putative pre-16S rRNA nuclease (138 aa).

Belongs to the YqgF nuclease family.

It localises to the cytoplasm. Functionally, could be a nuclease involved in processing of the 5'-end of pre-16S rRNA. The chain is Putative pre-16S rRNA nuclease from Porphyromonas gingivalis (strain ATCC BAA-308 / W83).